Reading from the N-terminus, the 549-residue chain is Glucose-6-phosphate isomerase (549 aa).

The active-site Proton donor is the Glu355. Residues His386 and Lys514 contribute to the active site.

Belongs to the GPI family.

The protein localises to the cytoplasm. It carries out the reaction alpha-D-glucose 6-phosphate = beta-D-fructose 6-phosphate. The protein operates within carbohydrate biosynthesis; gluconeogenesis. It functions in the pathway carbohydrate degradation; glycolysis; D-glyceraldehyde 3-phosphate and glycerone phosphate from D-glucose: step 2/4. In terms of biological role, catalyzes the reversible isomerization of glucose-6-phosphate to fructose-6-phosphate. This chain is Glucose-6-phosphate isomerase, found in Salmonella schwarzengrund (strain CVM19633).